An 89-amino-acid chain; its full sequence is Small ribosomal subunit protein uS15 (89 aa).

Belongs to the universal ribosomal protein uS15 family. Part of the 30S ribosomal subunit. Forms a bridge to the 50S subunit in the 70S ribosome, contacting the 23S rRNA.

Functionally, one of the primary rRNA binding proteins, it binds directly to 16S rRNA where it helps nucleate assembly of the platform of the 30S subunit by binding and bridging several RNA helices of the 16S rRNA. In terms of biological role, forms an intersubunit bridge (bridge B4) with the 23S rRNA of the 50S subunit in the ribosome. The chain is Small ribosomal subunit protein uS15 from Gluconobacter oxydans (strain 621H) (Gluconobacter suboxydans).